The sequence spans 117 residues: Protein Wnt-10b (117 aa).

The O-palmitoleoyl serine; by PORCN moiety is linked to residue serine 1. Cysteine 83 and cysteine 98 form a disulfide bridge. The N-linked (GlcNAc...) asparagine glycan is linked to asparagine 84.

It belongs to the Wnt family. In terms of processing, palmitoleoylation is required for efficient binding to frizzled receptors. Depalmitoleoylation leads to Wnt signaling pathway inhibition.

It is found in the secreted. Its subcellular location is the extracellular space. The protein resides in the extracellular matrix. Member of the Wnt ligand gene family that encodes for secreted proteins, which activate the Wnt signaling cascade. Involved in neurogenesis. Performs a partially redundant function with wnt1 in the formation of the midbrain-hindbrain boundary (MHB) organizer. The polypeptide is Protein Wnt-10b (WNT-10B) (Plethodon jordani (Red-cheeked salamander)).